Here is a 240-residue protein sequence, read N- to C-terminus: Ribonuclease P protein component 3 (240 aa).

This sequence belongs to the eukaryotic/archaeal RNase P protein component 3 family. Consists of a catalytic RNA component and at least 4-5 protein subunits.

It localises to the cytoplasm. It carries out the reaction Endonucleolytic cleavage of RNA, removing 5'-extranucleotides from tRNA precursor.. In terms of biological role, part of ribonuclease P, a protein complex that generates mature tRNA molecules by cleaving their 5'-ends. The polypeptide is Ribonuclease P protein component 3 (Halorubrum lacusprofundi (strain ATCC 49239 / DSM 5036 / JCM 8891 / ACAM 34)).